Consider the following 443-residue polypeptide: Thymidine phosphorylase (443 aa).

The protein belongs to the thymidine/pyrimidine-nucleoside phosphorylase family. Homodimer.

The catalysed reaction is thymidine + phosphate = 2-deoxy-alpha-D-ribose 1-phosphate + thymine. It participates in pyrimidine metabolism; dTMP biosynthesis via salvage pathway; dTMP from thymine: step 1/2. Functionally, the enzymes which catalyze the reversible phosphorolysis of pyrimidine nucleosides are involved in the degradation of these compounds and in their utilization as carbon and energy sources, or in the rescue of pyrimidine bases for nucleotide synthesis. This is Thymidine phosphorylase from Aeromonas hydrophila subsp. hydrophila (strain ATCC 7966 / DSM 30187 / BCRC 13018 / CCUG 14551 / JCM 1027 / KCTC 2358 / NCIMB 9240 / NCTC 8049).